Consider the following 27-residue polypeptide: Bombinin-like peptide 2 (27 aa).

Asparagine 27 is subject to Asparagine amide.

It belongs to the bombinin family. Expressed by the skin glands.

Its subcellular location is the secreted. Has antimicrobial activity, but no hemolytic activity. Preference on killing Gram-negative non-enteric bacteria. The sequence is that of Bombinin-like peptide 2 from Bombina orientalis (Oriental fire-bellied toad).